Reading from the N-terminus, the 185-residue chain is Ribosome-recycling factor (185 aa).

It belongs to the RRF family.

The protein localises to the cytoplasm. In terms of biological role, responsible for the release of ribosomes from messenger RNA at the termination of protein biosynthesis. May increase the efficiency of translation by recycling ribosomes from one round of translation to another. The chain is Ribosome-recycling factor from Legionella pneumophila (strain Corby).